We begin with the raw amino-acid sequence, 339 residues long: Glycerol-3-phosphate dehydrogenase [NAD(P)+] (339 aa).

NADPH is bound by residues Ser-15, Tyr-16, His-36, and Lys-110. Sn-glycerol 3-phosphate is bound by residues Lys-110, Gly-139, and Thr-141. Residue Ala-143 participates in NADPH binding. Residues Lys-195, Asp-248, Ser-258, Arg-259, and Asn-260 each coordinate sn-glycerol 3-phosphate. The active-site Proton acceptor is the Lys-195. Arg-259 contacts NADPH. Positions 283 and 285 each coordinate NADPH.

It belongs to the NAD-dependent glycerol-3-phosphate dehydrogenase family.

It is found in the cytoplasm. It carries out the reaction sn-glycerol 3-phosphate + NAD(+) = dihydroxyacetone phosphate + NADH + H(+). The catalysed reaction is sn-glycerol 3-phosphate + NADP(+) = dihydroxyacetone phosphate + NADPH + H(+). Its pathway is membrane lipid metabolism; glycerophospholipid metabolism. Its function is as follows. Catalyzes the reduction of the glycolytic intermediate dihydroxyacetone phosphate (DHAP) to sn-glycerol 3-phosphate (G3P), the key precursor for phospholipid synthesis. This is Glycerol-3-phosphate dehydrogenase [NAD(P)+] from Yersinia pseudotuberculosis serotype O:1b (strain IP 31758).